We begin with the raw amino-acid sequence, 523 residues long: GMP synthase [glutamine-hydrolyzing] (523 aa).

In terms of domain architecture, Glutamine amidotransferase type-1 spans 9–198; it reads PVLVVDYGAQ…LTEIAGLEQN (190 aa). Residue cysteine 86 is the Nucleophile of the active site. Catalysis depends on residues histidine 172 and glutamate 174. A GMPS ATP-PPase domain is found at 199–397; sequence WTAANIAEEL…LGLPEVIVAR (199 aa). 227-233 is an ATP binding site; sequence SGGVDSA.

In terms of assembly, homodimer.

The catalysed reaction is XMP + L-glutamine + ATP + H2O = GMP + L-glutamate + AMP + diphosphate + 2 H(+). It functions in the pathway purine metabolism; GMP biosynthesis; GMP from XMP (L-Gln route): step 1/1. Functionally, catalyzes the synthesis of GMP from XMP. The chain is GMP synthase [glutamine-hydrolyzing] from Corynebacterium efficiens (strain DSM 44549 / YS-314 / AJ 12310 / JCM 11189 / NBRC 100395).